We begin with the raw amino-acid sequence, 666 residues long: Transcriptional regulator MIT1 (666 aa).

A compositionally biased stretch (low complexity) spans 90-104 (GSNANATSSGSTDSA). Disordered stretches follow at residues 90 to 157 (GSNA…SNRS), 232 to 254 (VKNN…NSST), 314 to 389 (PPYI…FHNA), 425 to 479 (YTTQ…AENV), and 528 to 552 (AQEN…GTML). Composition is skewed to polar residues over residues 108–121 (DGTS…SSSK) and 139–157 (GHSS…SNRS). The residue at position 152 (Ser-152) is a Phosphoserine. A compositionally biased stretch (low complexity) spans 233–254 (KNNSTTTGNGPNNINNKSNSST). A compositionally biased stretch (polar residues) spans 314–333 (PPYITQSPDNTNATGMNTHV). The segment covering 334 to 384 (NNNNNNSNNSSNSNNSNNNNNNNNNNNNNNNNNINNINNVNTNAGNGNNPN) has biased composition (low complexity). Positions 436–451 (ASTNENQGYSTSSTQH) are enriched in polar residues. Low complexity predominate over residues 460–476 (SQSASAAAGATGTPGTA). Polar residues predominate over residues 530-552 (ENTTSNTNAEPSGATSTNSGTML).

The protein belongs to the MIT1/WOR1 family.

It is found in the cytoplasm. The protein localises to the nucleus. In terms of biological role, transcriptional regulator of pseudohyphal growth. This is Transcriptional regulator MIT1 (MIT1) from Saccharomyces cerevisiae (strain ATCC 204508 / S288c) (Baker's yeast).